The sequence spans 482 residues: MSKKLHIKTWGCQMNEYDSQKMAELLDATNGYQLTDDATDADVILLNTCSIREKAQEKVFHQLGRWKLLKDDKPDLIIGVGGCVASQEGDSIRQRAPFVDVIFGPQTLHRLPEMIKQVQGDKGSSVVDISFPEIEKFDRLPEPKADGPSAFVSIMEGCSKYCTFCVVPYTRGEEVSRPVDDVLLEIAQLAEQSVREVNLLGQNVNAYRGDTHDGEICYFSDLIRLIAAIDGIDRIRYTTSHPVEFTQDIVDVYADVPELVDHLHLPVQSGSDRILNLMKRGHTAIEYKSTIRKLRKIRPNLSMSSDFIIGFPGETQDDFEATMKLISDVGFDMSFSFIYSARPGTPAADLPDDVTEQEKKERLYLLQNRITQMAQQISRQMFDTEQRILVEGPSKKNPMELRGRTENNRVVNFVGPHTVIGQFVDVRITEALPNSLRGDLIRTESEMNLRREIAPSAILTKAASLEPKPDTINEIGVATFVP.

An MTTase N-terminal domain is found at 3 to 120 (KKLHIKTWGC…LPEMIKQVQG (118 aa)). Residues C12, C49, C83, C158, C162, and C165 each contribute to the [4Fe-4S] cluster site. Residues 144–376 (KADGPSAFVS…QNRITQMAQQ (233 aa)) enclose the Radical SAM core domain. One can recognise a TRAM domain in the interval 379–442 (RQMFDTEQRI…PNSLRGDLIR (64 aa)).

Belongs to the methylthiotransferase family. MiaB subfamily. Monomer. The cofactor is [4Fe-4S] cluster.

The protein localises to the cytoplasm. It carries out the reaction N(6)-dimethylallyladenosine(37) in tRNA + (sulfur carrier)-SH + AH2 + 2 S-adenosyl-L-methionine = 2-methylsulfanyl-N(6)-dimethylallyladenosine(37) in tRNA + (sulfur carrier)-H + 5'-deoxyadenosine + L-methionine + A + S-adenosyl-L-homocysteine + 2 H(+). Its function is as follows. Catalyzes the methylthiolation of N6-(dimethylallyl)adenosine (i(6)A), leading to the formation of 2-methylthio-N6-(dimethylallyl)adenosine (ms(2)i(6)A) at position 37 in tRNAs that read codons beginning with uridine. The chain is tRNA-2-methylthio-N(6)-dimethylallyladenosine synthase from Pseudoalteromonas translucida (strain TAC 125).